The chain runs to 199 residues: Photosystem I reaction center subunit XI (199 aa).

The next 2 helical transmembrane spans lie at 108-128 and 165-185; these read ITAG…LLVL and FWLG…TLHL.

The protein belongs to the PsaL family.

The protein resides in the cellular thylakoid membrane. This Prochlorococcus marinus (strain MIT 9515) protein is Photosystem I reaction center subunit XI.